Here is a 254-residue protein sequence, read N- to C-terminus: 3-dehydroquinate dehydratase (254 aa).

Residues 47–49 and Arg83 each bind 3-dehydroquinate; that span reads EFR. His144 functions as the Proton donor/acceptor in the catalytic mechanism. Lys171 serves as the catalytic Schiff-base intermediate with substrate. Arg213, Ser232, and Gln236 together coordinate 3-dehydroquinate.

The protein belongs to the type-I 3-dehydroquinase family. Homodimer.

The catalysed reaction is 3-dehydroquinate = 3-dehydroshikimate + H2O. Its pathway is metabolic intermediate biosynthesis; chorismate biosynthesis; chorismate from D-erythrose 4-phosphate and phosphoenolpyruvate: step 3/7. Its function is as follows. Involved in the third step of the chorismate pathway, which leads to the biosynthesis of aromatic amino acids. Catalyzes the cis-dehydration of 3-dehydroquinate (DHQ) and introduces the first double bond of the aromatic ring to yield 3-dehydroshikimate. In Neisseria meningitidis serogroup B (strain ATCC BAA-335 / MC58), this protein is 3-dehydroquinate dehydratase.